We begin with the raw amino-acid sequence, 222 residues long: MEKLSLCLLVIISLSNAFAQTDMIGKAFVFPKESENSYVSLTARLTKPLTAFTVCLRVYTDLNRDYSLFSYATKTQYNEILLFRGKTAVYSISVGGADVVFKPHQSSEPMHFCMTWESTSGITELWVDGKPMVRRSLKRGYSLGTQASIILGQEQDAFAGGFEKNQCLVGDIGDVNMWDYVLSPEEINTVYAGGTFSPNVLNWRALRYEMSGEVYVKPQLWP.

A signal peptide spans Met1–Ala19. Gln20 carries the post-translational modification Pyrrolidone carboxylic acid. Residues Ile24 to Pro222 form the Pentraxin (PTX) domain. Cysteines 55 and 113 form a disulfide. The Ca(2+) site is built by Asn78, Glu154, Gln155, Asp156, and Gln166.

It belongs to the pentraxin family. As to quaternary structure, homopentamer. Pentraxin (or pentaxin) have a discoid arrangement of 5 non-covalently bound subunits. Interacts with FCN1; may regulate monocyte activation by FCN1. The cofactor is Ca(2+). As to expression, found in plasma.

It localises to the secreted. Its function is as follows. Displays several functions associated with host defense: it promotes agglutination, bacterial capsular swelling, phagocytosis and complement fixation through its calcium-dependent binding to phosphorylcholine. Can interact with DNA and histones and may scavenge nuclear material released from damaged circulating cells. This chain is C-reactive protein (CRP), found in Sus scrofa (Pig).